The chain runs to 99 residues: 10 kDa heat shock protein, mitochondrial (99 aa).

This sequence belongs to the GroES chaperonin family. As to quaternary structure, homoheptamer arranged in a ring structure. 2 heptameric Hsp10 rings interact with a Hsp60 tetradecamer in the structure of a back-to-back double heptameric ring to form the symmetrical football complex.

It localises to the mitochondrion matrix. Its function is as follows. Co-chaperonin implicated in mitochondrial protein import and macromolecular assembly. Together with Hsp60, facilitates the correct folding of imported proteins. May also prevent misfolding and promote the refolding and proper assembly of unfolded polypeptides generated under stress conditions in the mitochondrial matrix. The functional units of these chaperonins consist of heptameric rings of the large subunit Hsp60, which function as a back-to-back double ring. In a cyclic reaction, Hsp60 ring complexes bind one unfolded substrate protein per ring, followed by the binding of ATP and association with 2 heptameric rings of the co-chaperonin Hsp10. This leads to sequestration of the substrate protein in the inner cavity of Hsp60 where, for a certain period of time, it can fold undisturbed by other cell components. Synchronous hydrolysis of ATP in all Hsp60 subunits results in the dissociation of the chaperonin rings and the release of ADP and the folded substrate protein. The polypeptide is 10 kDa heat shock protein, mitochondrial (hspe1) (Oryzias latipes (Japanese rice fish)).